A 189-amino-acid chain; its full sequence is Interferon alpha-C (189 aa).

Residues 1-23 (MAPAWSFRLALLLLSCNAICSLG) form the signal peptide. Disulfide bonds link Cys24–Cys122 and Cys52–Cys162.

This sequence belongs to the alpha/beta interferon family.

It localises to the secreted. Its function is as follows. Produced by macrophages, IFN-alpha have antiviral activities. Interferon stimulates the production of two enzymes: a protein kinase and an oligoadenylate synthetase. The protein is Interferon alpha-C (IFNAC) of Bos taurus (Bovine).